The following is a 477-amino-acid chain: Fibrinogen beta chain (477 aa).

The disordered stretch occupies residues 1 to 76 (EDLSLVGQPE…ASPRPQEAQK (76 aa)). The residue at position 13 (Tyr13) is a Sulfotyrosine. A glycan (N-linked (GlcNAc...) asparagine) is linked at Asn27. Residues 44–55 (RVRRPPLRHRRL) are compositionally biased toward basic residues. 3 disulfide bridges follow: Cys220–Cys304, Cys230–Cys259, and Cys412–Cys425. A Fibrinogen C-terminal domain is found at 221–476 (RVPVVSGMHC…QMAMKLRPKW (256 aa)).

In terms of assembly, heterohexamer; disulfide linked. Contains 2 sets of 3 non-identical chains (alpha, beta and gamma). The 2 heterotrimers are in head to head conformation with the N-termini in a small central domain. Post-translationally, conversion of fibrinogen to fibrin is triggered by thrombin, which cleaves fibrinopeptides A and B from alpha and beta chains, and thus exposes the N-terminal polymerization sites responsible for the formation of the soft clot. The soft clot is converted into the hard clot by factor XIIIA which catalyzes the epsilon-(gamma-glutamyl)lysine cross-linking between gamma chains (stronger) and between alpha chains (weaker) of different monomers.

It localises to the secreted. Its function is as follows. Fibrinogen has a double function: yielding monomers that polymerize into fibrin and acting as a cofactor in platelet aggregation. The protein is Fibrinogen beta chain of Petromyzon marinus (Sea lamprey).